The primary structure comprises 918 residues: Calcium-transporting ATPase type 2C member 1 (918 aa).

Residues 1-78 (MKVARFQKIP…EPLWKKYISQ (78 aa)) lie on the Cytoplasmic side of the membrane. A helical membrane pass occupies residues 79-95 (FKNPLIMLLLASAVISI). At 96-99 (LMRQ) the chain is on the extracellular side. A helical membrane pass occupies residues 100 to 121 (FDDAVSITVAIVIVVTVAFVQE). At 122 to 262 (YRSEKSLEEL…PKTPLQKSMD (141 aa)) the chain is on the cytoplasmic side. The chain crosses the membrane as a helical span at residues 263–282 (LLGKQLSFYSFGIIGIIMLV). The Extracellular portion of the chain corresponds to 283-294 (GWLLGKDILEMF). Residues 295 to 316 (TISVSLAVAAIPEGLPIVVTVT) form a helical membrane-spanning segment. Residues 317 to 699 (LALGVMRMVK…EGKGIYNNIK (383 aa)) lie on the Cytoplasmic side of the membrane. Residue aspartate 349 is the 4-aspartylphosphate intermediate of the active site. The Mg(2+) site is built by aspartate 643 and aspartate 647. The chain crosses the membrane as a helical span at residues 700-722 (NFVRFQLSTSIAALTLISLATLM). The Extracellular segment spans residues 723-727 (NFPNP). The chain crosses the membrane as a helical span at residues 728–751 (LNAMQILWINIIMDGPPAQSLGVE). Residues 752 to 775 (PVDKDVIRKPPRNWKDSILTKNLI) lie on the Cytoplasmic side of the membrane. The helical transmembrane segment at 776–794 (LKILVSSIIIVCGTLFVFW) threads the bilayer. At 795 to 801 (RELRDNV) the chain is on the extracellular side. Residues 802–827 (ITPRDTTMTFTCFVFFDMFNALSSRS) traverse the membrane as a helical segment. The Cytoplasmic portion of the chain corresponds to 828–842 (QTKSVFEIGLCSNKM). The chain crosses the membrane as a helical span at residues 843-862 (FCYAVLGSIMGQLLVIYFPP). The Extracellular portion of the chain corresponds to 863–875 (LQKVFQTESLSIL). Residues 876–892 (DLLFLLGLTSSVCIVSE) form a helical membrane-spanning segment. Residues 893–918 (IIKKVERSREKVQKNAGSASSSFLEV) lie on the Cytoplasmic side of the membrane.

The protein belongs to the cation transport ATPase (P-type) (TC 3.A.3) family. Type IIA subfamily. Monomer. Homodimer. Expressed in hippocampal neurons in the CA3 region of the Amon's horn (at protein level). Expressed in brain, heart, lung, stomach, liver, colon and mammary gland.

The protein resides in the golgi apparatus. It is found in the trans-Golgi network membrane. The protein localises to the golgi stack membrane. It carries out the reaction Ca(2+)(in) + ATP + H2O = Ca(2+)(out) + ADP + phosphate + H(+). It catalyses the reaction Mn(2+)(in) + ATP + H2O = Mn(2+)(out) + ADP + phosphate + H(+). In terms of biological role, ATP-driven pump that supplies the Golgi apparatus with Ca(2+) and Mn(2+) ions, both essential cofactors for processing and trafficking of newly synthesized proteins in the secretory pathway. Within a catalytic cycle, acquires Ca(2+) or Mn(2+) ions on the cytoplasmic side of the membrane and delivers them to the lumenal side. The transfer of ions across the membrane is coupled to ATP hydrolysis and is associated with a transient phosphorylation that shifts the pump conformation from inward-facing to outward-facing state. Plays a primary role in the maintenance of Ca(2+) homeostasis in the trans-Golgi compartment with a functional impact on Golgi and post-Golgi protein sorting as well as a structural impact on cisternae morphology. Responsible for loading the Golgi stores with Ca(2+) ions in keratinocytes, contributing to keratinocyte differentiation and epidermis integrity. Participates in Ca(2+) and Mn(2+) ions uptake into the Golgi store of hippocampal neurons and regulates protein trafficking required for neural polarity. May also play a role in the maintenance of Ca(2+) and Mn(2+) homeostasis and signaling in the cytosol while preventing cytotoxicity. In Mus musculus (Mouse), this protein is Calcium-transporting ATPase type 2C member 1.